We begin with the raw amino-acid sequence, 291 residues long: Prolyl 4-hydroxylase 5 (291 aa).

Topologically, residues 1 to 22 are cytoplasmic; that stretch reads MASKSKQHLRYQPRKSVSRSTQ. Residues 23-43 traverse the membrane as a helical; Signal-anchor for type II membrane protein segment; that stretch reads AFTVLILLLVVILILLGLGIL. The Extracellular segment spans residues 44 to 291; it reads SLPNANRNSS…KWFHVHEFKV (248 aa). Asparagine 51 carries N-linked (GlcNAc...) asparagine glycosylation. The 124-residue stretch at 163 to 286 folds into the Fe2OG dioxygenase domain; it reads NGEGLQVLHY…KWSSTKWFHV (124 aa). Fe cation is bound by residues histidine 181 and aspartate 183. The N-linked (GlcNAc...) asparagine glycan is linked to asparagine 222. Histidine 267 contacts Fe cation. Position 277 (lysine 277) interacts with 2-oxoglutarate.

This sequence belongs to the P4HA family. Fe(2+) is required as a cofactor. The cofactor is L-ascorbate. As to expression, expressed in epidermal root hair cells (trichoblasts).

The protein resides in the endoplasmic reticulum membrane. Its subcellular location is the golgi apparatus membrane. The catalysed reaction is L-prolyl-[collagen] + 2-oxoglutarate + O2 = trans-4-hydroxy-L-prolyl-[collagen] + succinate + CO2. Functionally, catalyzes the post-translational formation of 4-hydroxyproline in -Xaa-Pro-Gly- sequences in proline-rich peptide sequences of plant glycoproteins and other proteins. Hydroxyprolines are important constituent of many plant cell wall glycoproteins such as extensins, hydroxyproline-rich glycoproteins, lectins and arabinogalactan proteins. Possesses high affinity for leucine-rich repeat and proline-rich extensins of root cell walls that are essential for root hair development. Hydroxyprolines define the subsequent O-glycosylation sites by arabinosyltransferases which elongate the O-arabinosides on extensins. This chain is Prolyl 4-hydroxylase 5, found in Arabidopsis thaliana (Mouse-ear cress).